The chain runs to 375 residues: Mitogen-activated protein kinase 4a (375 aa).

The 287-residue stretch at 39-325 (KPPLRPIGRG…VEAALAHPYL (287 aa)) folds into the Protein kinase domain. ATP contacts are provided by residues 45 to 53 (IGRGAYGIV) and Lys-68. Asp-165 functions as the Proton acceptor in the catalytic mechanism. Thr-197 carries the post-translational modification Phosphothreonine. The TXY signature appears at 197 to 199 (TEY). The residue at position 199 (Tyr-199) is a Phosphotyrosine.

Belongs to the protein kinase superfamily. CMGC Ser/Thr protein kinase family. MAP kinase subfamily. Mg(2+) serves as cofactor. Dually phosphorylated on Thr-197 and Tyr-199, which activates the enzyme. Phosphorylated in response to pathogen-associated molecular pattern (PAMP) chitin and in response to necrotrophic fungus B.cinerea spores. Not phosphorylated in response to osmotic stress. Expressed strongly in the apical cells of caulonemal air filaments and rhizoids in fully developed plants and less strongly, but readily detectable in filamentous protonemal tissue at the edge of the plant consisting of both chloronema and caulonema. When filamentous growth of protonema is promoted, the expression is strongest in newly formed apical tip cells of protonemal tissue.

The protein localises to the cytoplasm. It is found in the nucleus. It catalyses the reaction L-seryl-[protein] + ATP = O-phospho-L-seryl-[protein] + ADP + H(+). The catalysed reaction is L-threonyl-[protein] + ATP = O-phospho-L-threonyl-[protein] + ADP + H(+). With respect to regulation, activated by threonine and tyrosine phosphorylation. Activated in response to bacterial and fungal pathogen-associated molecular patterns (PAMPs) including chitin, chitosan and peptidyl glycans (PGNs). Activation in response to chitin requires the CERK1, MEKK1a/b, MKK1a/b/c and MPK4a/b signaling pathway. Activated in response to necrotrophic fungus B.cinerea spores. Not activated in response to osmotic stress. Its function is as follows. The CERK1, MEKK1a/b, MKK1a/b/c and MPK4a/b proteins are involved in pathogen defense. The pathway induces rapid growth inhibition, cell wall depositions and accumulation of defense-related transcripts. This protein is required for innate immunity triggered by pathogen-associated molecular patterns (PAMPs). Involved in resistance to necrotrophic fungi B.cinerea and A.brassicicola. Involved in the transduction of signals from chitosan perception to the activation of defense genes. In Physcomitrium patens (Spreading-leaved earth moss), this protein is Mitogen-activated protein kinase 4a (MPK4a).